A 244-amino-acid chain; its full sequence is DNA polymerase sliding clamp (244 aa).

It belongs to the PCNA family. Homotrimer. The subunits circularize to form a toroid; DNA passes through its center. Replication factor C (RFC) is required to load the toroid on the DNA.

In terms of biological role, sliding clamp subunit that acts as a moving platform for DNA processing. Responsible for tethering the catalytic subunit of DNA polymerase and other proteins to DNA during high-speed replication. The sequence is that of DNA polymerase sliding clamp from Methanobrevibacter smithii (strain ATCC 35061 / DSM 861 / OCM 144 / PS).